Reading from the N-terminus, the 292-residue chain is 4-hydroxy-tetrahydrodipicolinate synthase (292 aa).

Pyruvate is bound at residue Thr-45. The active-site Proton donor/acceptor is the Tyr-133. The Schiff-base intermediate with substrate role is filled by Lys-161. Ile-203 contributes to the pyruvate binding site.

This sequence belongs to the DapA family. As to quaternary structure, homotetramer; dimer of dimers.

Its subcellular location is the cytoplasm. It carries out the reaction L-aspartate 4-semialdehyde + pyruvate = (2S,4S)-4-hydroxy-2,3,4,5-tetrahydrodipicolinate + H2O + H(+). The protein operates within amino-acid biosynthesis; L-lysine biosynthesis via DAP pathway; (S)-tetrahydrodipicolinate from L-aspartate: step 3/4. Functionally, catalyzes the condensation of (S)-aspartate-beta-semialdehyde [(S)-ASA] and pyruvate to 4-hydroxy-tetrahydrodipicolinate (HTPA). The protein is 4-hydroxy-tetrahydrodipicolinate synthase of Shigella dysenteriae serotype 1 (strain Sd197).